Consider the following 455-residue polypeptide: Pentatricopeptide repeat-containing protein At3g26630, chloroplastic (455 aa).

Residues 1 to 19 (MAAPSPSSPPNLLSPPPFR) constitute a chloroplast transit peptide. PPR repeat units lie at residues 51-81 (DQLLVRQLISVSSSFGETQYASLVFNQLQSP), 82-117 (STFTWNLMIRSLSVNHKPREALLLFILMMISHQSQF), 118-152 (DKFTFPFVIKACLASSSIRLGTQVHGLAIKAGFFN), 153-187 (DVFFQNTLMDLYFKCGKPDSGRKVFDKMPGRSIVS), 188-214 (WTTMLYGLVSNSQLDSAEIVFNQMPMR), 215-249 (NVVSWTAMITAYVKNRRPDEAFQLFRRMQVDDVKP), 250-284 (NEFTIVNLLQASTQLGSLSMGRWVHDYAHKNGFVL), 285-315 (DCFLGTALIDMYSKCGSLQDARKVFDVMQGK), 316-350 (SLATWNSMITSLGVHGCGEEALSLFEEMEEEASVE), 352-387 (DAITFVGVLSACANTGNVKDGLRYFTRMIQVYGISP), and 388-418 (IREHNACMIQLLEQALEVEKASNLVESMDSD).

Belongs to the PPR family. PCMP-A subfamily.

Its subcellular location is the plastid. The protein localises to the chloroplast. The chain is Pentatricopeptide repeat-containing protein At3g26630, chloroplastic (PCMP-A6) from Arabidopsis thaliana (Mouse-ear cress).